Here is a 287-residue protein sequence, read N- to C-terminus: Energy-coupling factor transporter ATP-binding protein EcfA2 (287 aa).

One can recognise an ABC transporter domain in the interval 3–245 (IKFENVSYVY…SEWLQKHHLA (243 aa)). Residue 40–47 (GHTGSGKS) participates in ATP binding.

This sequence belongs to the ABC transporter superfamily. Energy-coupling factor EcfA family. As to quaternary structure, forms a stable energy-coupling factor (ECF) transporter complex composed of 2 membrane-embedded substrate-binding proteins (S component), 2 ATP-binding proteins (A component) and 2 transmembrane proteins (T component).

It is found in the cell membrane. Functionally, ATP-binding (A) component of a common energy-coupling factor (ECF) ABC-transporter complex. Unlike classic ABC transporters this ECF transporter provides the energy necessary to transport a number of different substrates. This chain is Energy-coupling factor transporter ATP-binding protein EcfA2, found in Lactobacillus delbrueckii subsp. bulgaricus (strain ATCC 11842 / DSM 20081 / BCRC 10696 / JCM 1002 / NBRC 13953 / NCIMB 11778 / NCTC 12712 / WDCM 00102 / Lb 14).